The sequence spans 468 residues: Secretogranin-3 (468 aa).

A signal peptide spans 1–19 (MGFLGTGTWILVLVLPIQA). The interval 23 to 69 (PGGSQDKSLHNRELSAERPLNEQIAEAEEDKIKKTYPPENKPGQSNY) is disordered. The segment covering 29–42 (KSLHNRELSAERPL) has biased composition (basic and acidic residues). Phosphoserine is present on Ser37. Ser37 is a glycosylation site (O-linked (Xyl...) (chondroitin sulfate) serine). O-linked (GalNAc...) threonine glycans are attached at residues Thr216 and Thr231. A disordered region spans residues 353-406 (KLFPAPSEKSHEETDSTKEEAAKMEKEYGSLKDSTKDDNSNPGGKTDEPKGKTE). An O-linked (GalNAc...) serine glycan is attached at Ser359. Over residues 360–406 (EKSHEETDSTKEEAAKMEKEYGSLKDSTKDDNSNPGGKTDEPKGKTE) the composition is skewed to basic and acidic residues. Ser362 is modified (phosphoserine).

Interacts with CHGA. Interacts with secretogranin II/SCG2. Interacts (via C-terminus) with CPE. In terms of processing, O-glycosylated. In terms of tissue distribution, detected in urine (at protein level). Expressed in brain, heart, kidney, liver and skeletal muscle.

It localises to the cytoplasmic vesicle. The protein localises to the secretory vesicle. The protein resides in the secretory vesicle membrane. It is found in the secreted. Its function is as follows. Member of the granin protein family that regulates the biogenesis of secretory granules. Acts as a sorting receptor for intragranular proteins including chromogranin A/CHGA. May also play a role in angiogenesis. Promotes endothelial proliferation, migration and tube formation through MEK/ERK signaling pathway. The protein is Secretogranin-3 (SCG3) of Homo sapiens (Human).